The sequence spans 77 residues: MIEQGRSSQDLKWLENYFKEGGNKMAETYINELKSKLDARKKEILSQLNEEYNKILKSRFEDLESVKRNILKEVQNI.

This sequence to E.hirae NtpH. Sul-ATPase is composed of six (or maybe five) subunits: alpha, beta, delta, gamma, C (proteolipid), and possibly epsilon.

It carries out the reaction ATP + H2O + 4 H(+)(in) = ADP + phosphate + 5 H(+)(out). The polypeptide is Membrane-associated ATPase epsilon chain (atpE) (Sulfolobus acidocaldarius (strain ATCC 33909 / DSM 639 / JCM 8929 / NBRC 15157 / NCIMB 11770)).